Consider the following 486-residue polypeptide: CUGBP Elav-like family member 5 (486 aa).

Residues Met1 to Arg11 are compositionally biased toward basic and acidic residues. The interval Met1 to Asp39 is disordered. A compositionally biased stretch (low complexity) spans Gln12–Arg24. RRM domains lie at Ile47–Ser128, Arg135–Thr215, and Cys401–Pro479.

It belongs to the CELF/BRUNOL family.

The protein localises to the nucleus. The protein resides in the cytoplasm. RNA-binding protein that may be implicated in the regulation of pre-mRNA alternative splicing. The sequence is that of CUGBP Elav-like family member 5 (celf5) from Xenopus tropicalis (Western clawed frog).